The sequence spans 224 residues: Probable mitochondrial import inner membrane translocase subunit Tim17 4 (224 aa).

The next 3 helical transmembrane spans lie at 16–36, 60–80, and 115–135; these read CGCA…LKGF, AIAG…CVMV, and AFVG…VATI.

Belongs to the Tim17/Tim22/Tim23 family. In terms of assembly, component of the TIM23 complex at least composed of Tim23, Tim17 (Tim17a1, Tim17a2 or Tim17b1) and a Tim50. The complex interacts with the Tim44 component of the PAM complex.

The protein resides in the mitochondrion inner membrane. Essential component of the TIM23 complex, a complex that mediates the translocation of transit peptide-containing proteins across the mitochondrial inner membrane. The protein is Probable mitochondrial import inner membrane translocase subunit Tim17 4 (Tim17a2) of Drosophila melanogaster (Fruit fly).